A 260-amino-acid chain; its full sequence is uncharacterized protein (260 aa).

An N-terminal signal peptide occupies residues 1 to 22 (MKHSKKLLLCISFLLITIFISG). Cys-23 is lipidated: N-palmitoyl cysteine. Cys-23 is lipidated: S-diacylglycerol cysteine.

This sequence belongs to the staphylococcal tandem lipoprotein family.

It localises to the cell membrane. This is an uncharacterized protein from Staphylococcus epidermidis (strain ATCC 35984 / DSM 28319 / BCRC 17069 / CCUG 31568 / BM 3577 / RP62A).